The sequence spans 31 residues: SEESNLCDLLRDYDKPAQEVIAEMTDGGVDR.

Cys7 is a Zn(2+) binding site.

It belongs to the zinc-containing alcohol dehydrogenase family. Class-P subfamily. Homodimer. Requires Zn(2+) as cofactor.

Its subcellular location is the cytoplasm. It carries out the reaction a primary alcohol + NAD(+) = an aldehyde + NADH + H(+). The enzyme catalyses a secondary alcohol + NAD(+) = a ketone + NADH + H(+). The protein is Alcohol dehydrogenase 1 of Catharanthus roseus (Madagascar periwinkle).